We begin with the raw amino-acid sequence, 350 residues long: Biotin synthase (350 aa).

The region spanning 54-278 (REIQLSTLLS…TMPQSYVRLS (225 aa)) is the Radical SAM core domain. [4Fe-4S] cluster is bound by residues Cys-69, Cys-73, and Cys-76. The [2Fe-2S] cluster site is built by Cys-113, Cys-144, Cys-204, and Arg-276.

The protein belongs to the radical SAM superfamily. Biotin synthase family. Homodimer. It depends on [4Fe-4S] cluster as a cofactor. [2Fe-2S] cluster serves as cofactor.

The enzyme catalyses (4R,5S)-dethiobiotin + (sulfur carrier)-SH + 2 reduced [2Fe-2S]-[ferredoxin] + 2 S-adenosyl-L-methionine = (sulfur carrier)-H + biotin + 2 5'-deoxyadenosine + 2 L-methionine + 2 oxidized [2Fe-2S]-[ferredoxin]. It functions in the pathway cofactor biosynthesis; biotin biosynthesis; biotin from 7,8-diaminononanoate: step 2/2. Functionally, catalyzes the conversion of dethiobiotin (DTB) to biotin by the insertion of a sulfur atom into dethiobiotin via a radical-based mechanism. This is Biotin synthase from Neisseria meningitidis serogroup A / serotype 4A (strain DSM 15465 / Z2491).